Here is a 313-residue protein sequence, read N- to C-terminus: Malate dehydrogenase (313 aa).

NAD(+)-binding positions include 11 to 16 (GSGNIG) and aspartate 35. Residues arginine 84 and arginine 90 each contribute to the substrate site. NAD(+) contacts are provided by residues asparagine 97 and 120 to 122 (VTN). Positions 122 and 153 each coordinate substrate. Catalysis depends on histidine 177, which acts as the Proton acceptor.

This sequence belongs to the LDH/MDH superfamily. MDH type 3 family.

It catalyses the reaction (S)-malate + NAD(+) = oxaloacetate + NADH + H(+). Catalyzes the reversible oxidation of malate to oxaloacetate. The chain is Malate dehydrogenase from Ehrlichia ruminantium (strain Welgevonden).